The sequence spans 258 residues: Deoxyribose-phosphate aldolase (258 aa).

Catalysis depends on Asp101, which acts as the Proton donor/acceptor. Lys166 functions as the Schiff-base intermediate with acetaldehyde in the catalytic mechanism. Lys200 serves as the catalytic Proton donor/acceptor.

The protein belongs to the DeoC/FbaB aldolase family. DeoC type 2 subfamily.

The protein localises to the cytoplasm. The enzyme catalyses 2-deoxy-D-ribose 5-phosphate = D-glyceraldehyde 3-phosphate + acetaldehyde. It participates in carbohydrate degradation; 2-deoxy-D-ribose 1-phosphate degradation; D-glyceraldehyde 3-phosphate and acetaldehyde from 2-deoxy-alpha-D-ribose 1-phosphate: step 2/2. In terms of biological role, catalyzes a reversible aldol reaction between acetaldehyde and D-glyceraldehyde 3-phosphate to generate 2-deoxy-D-ribose 5-phosphate. The protein is Deoxyribose-phosphate aldolase of Actinobacillus pleuropneumoniae serotype 5b (strain L20).